Here is a 391-residue protein sequence, read N- to C-terminus: Winged helix repair factor 1 (391 aa).

Low complexity-rich tracts occupy residues 1–24 (MNIK…PSPI) and 49–63 (LSFN…SNIN). Positions 1–95 (MNIKRNQNNS…SITTTTATST (95 aa)) are disordered. A compositionally biased stretch (acidic residues) spans 64–74 (GEEDNDDDDRE). The segment covering 82-95 (NPNPSITTTTATST) has biased composition (low complexity).

This sequence belongs to the STK19 family.

The protein resides in the nucleus. In terms of biological role, DNA-binding protein which is required for efficient transcription-coupled nucleotide excision repair. This chain is Winged helix repair factor 1, found in Dictyostelium discoideum (Social amoeba).